A 77-amino-acid polypeptide reads, in one-letter code: UPF0346 protein LMOf2365_1885 (77 aa).

The protein belongs to the UPF0346 family.

In Listeria monocytogenes serotype 4b (strain F2365), this protein is UPF0346 protein LMOf2365_1885.